Here is a 150-residue protein sequence, read N- to C-terminus: Urease accessory protein UreE (150 aa).

The protein belongs to the UreE family.

It is found in the cytoplasm. In terms of biological role, involved in urease metallocenter assembly. Binds nickel. Probably functions as a nickel donor during metallocenter assembly. The protein is Urease accessory protein UreE of Staphylococcus aureus (strain MRSA252).